A 265-amino-acid chain; its full sequence is 5'-nucleotidase SurE (265 aa).

Residues Asp8, Asp9, Ser39, and Asn96 each contribute to the a divalent metal cation site.

The protein belongs to the SurE nucleotidase family. A divalent metal cation serves as cofactor.

Its subcellular location is the cytoplasm. It carries out the reaction a ribonucleoside 5'-phosphate + H2O = a ribonucleoside + phosphate. Functionally, nucleotidase that shows phosphatase activity on nucleoside 5'-monophosphates. This Dehalococcoides mccartyi (strain ATCC BAA-2100 / JCM 16839 / KCTC 5957 / BAV1) protein is 5'-nucleotidase SurE.